The chain runs to 695 residues: Lactotransferrin (695 aa).

The first 6 residues, 1–6, serve as a signal peptide directing secretion; that stretch reads LGLCLA. Transferrin-like domains follow at residues 12-339 and 351-680; these read VRWC…NLRE and VVWC…NLRR. Disulfide bonds link Cys-15–Cys-51 and Cys-25–Cys-42. Residue Asp-66 coordinates Fe(3+). Lys-79 is a catalytic residue. Tyr-98 serves as a coordination point for Fe(3+). Cystine bridges form between Cys-121/Cys-204, Cys-163/Cys-179, Cys-166/Cys-189, Cys-176/Cys-187, and Cys-237/Cys-251. Hydrogencarbonate-binding residues include Thr-123, Arg-127, Ala-129, and Gly-130. N-linked (GlcNAc...) asparagine glycosylation is present at Asn-143. Residue Tyr-198 coordinates Fe(3+). A Fe(3+)-binding site is contributed by His-259. Residue Ser-265 is the Nucleophile of the active site. Asn-287 carries an N-linked (GlcNAc...) asparagine glycan. 2 disulfides stabilise this stretch: Cys-354/Cys-386 and Cys-364/Cys-377. Asp-401 contributes to the Fe(3+) binding site. 8 cysteine pairs are disulfide-bonded: Cys-411/Cys-690, Cys-431/Cys-653, Cys-463/Cys-538, Cys-487/Cys-681, Cys-497/Cys-511, Cys-508/Cys-521, Cys-579/Cys-593, and Cys-631/Cys-636. Residue Pro-436 coordinates D-glucose. Tyr-439 serves as a coordination point for Fe(3+). Residues Thr-465, Arg-469, Ala-471, and Ala-472 each coordinate hydrogencarbonate. N-linked (GlcNAc...) asparagine glycosylation is present at Asn-482. Tyr-532 serves as a coordination point for Fe(3+). Asn-600 contacts D-glucose. Position 601 (His-601) interacts with Fe(3+). Tyr-666 is a D-glucose binding site.

The protein belongs to the transferrin family. In terms of assembly, monomer. Found in a complex with LTF, CLU, EPPIN and SEMG1. Found in a complex with MPO and LTF; interacts directly with CP, allows Fe(3+) incorporation into LTF and activation of CP ferroxidase activity. In terms of processing, poly-N-acetyllactosaminic carbohydrate moiety seems to be needed for TLR4 activation.

It localises to the secreted. The protein localises to the cytoplasmic granule. In terms of biological role, transferrins are iron binding transport proteins which can bind two Fe(3+) ions in association with the binding of an anion, usually bicarbonate. Major iron-binding and multifunctional protein found in exocrine fluids such as breast milk and mucosal secretions. Has antimicrobial activity, which depends on the extracellular cation concentration. Antimicrobial properties include bacteriostasis, which is related to its ability to sequester free iron and thus inhibit microbial growth, as well as direct bactericidal properties leading to the release of lipopolysaccharides from the bacterial outer membrane. Can also prevent bacterial biofilm development in P.aeruginosa infection. Has weak antifungal activity against C.albicans. Has anabolic, differentiating and anti-apoptotic effects on osteoblasts and can also inhibit osteoclastogenesis, possibly playing a role in the regulation of bone growth. Promotes binding of species C adenoviruses to epithelial cells, promoting adenovirus infection. Can inhibit papillomavirus infections. Stimulates the TLR4 signaling pathway leading to NF-kappa-B activation and subsequent pro-inflammatory cytokine production while also interfering with the lipopolysaccharide (LPS)-stimulated TLR4 signaling. Inhibits neutrophil granulocyte migration to sites of apoptosis, when secreted by apoptotic cells. Stimulates VEGFA-mediated endothelial cell migration and proliferation. Binds heparin, chondroitin sulfate and possibly other glycosaminoglycans (GAGs). Also binds specifically to pneumococcal surface protein A (PspA), the lipid A portion of bacterial lipopolysaccharide (LPS), lysozyme and DNA. Its function is as follows. Lactoferricin binds to the bacterial surface and is crucial for the bactericidal functions. Has some antiviral activity against papillomavirus infection. N-terminal region shows strong antifungal activity against C.albicans. Contains two BBXB heparin-binding consensus sequences that appear to form the predominate functional GAG-binding site. Functionally, the lactotransferrin transferrin-like domain 1 functions as a serine protease of the peptidase S60 family that cuts arginine rich regions. This function contributes to the antimicrobial activity. Shows a preferential cleavage at -Arg-Ser-Arg-Arg-|- and -Arg-Arg-Ser-Arg-|-, and of Z-Phe-Arg-|-aminomethylcoumarin sites. The chain is Lactotransferrin (LTF) from Equus caballus (Horse).